A 493-amino-acid polypeptide reads, in one-letter code: MTCGFSTVGSGFGSRAFSCVSACGPRPGRCCITAAPYRGISCYRGLTGGFGSRSVCGGFRAGYCSRSFGYRSGGVGGLSPPCITTVSVNESLLTPLNLEIDPNAQCVKQEEKEQIKCLNNRFAAFIDKVRFLEQQNKLLETKLQFYQNRQCCESNLEPLFEGYIETLRREAECVEADSGRLSSELNHVQEVLEGYKKKYEEEVALRATAENEFVALKKDVDCAYIRKSDLEANSEALIQEIDFLRRLYEEEIRVLQANISDTSVIVKMDNSRGLNMDNIVAEIKAQYDDIASRSRAEAESWYRSKCEEIKATVIRHGETLRRTKEEINELNRLIQRLTAEVENAKCQNSKLEAAVTQAEQQGEVALNDARCKLAGLEEALQKAKQDMACLLKEYQEVMNSKLGLDIEIATYRRLLEGEEQRLCEGVGAVNVCVSSSRGGVVCGDLCVSGSRPVTGSVCSAPCSGNLAVSTGLCAPCGQLNTTCGGGSCSLGRC.

The interval 1–111 (MTCGFSTVGS…PNAQCVKQEE (111 aa)) is head. The region spanning 111–422 (EKEQIKCLNN…RLLEGEEQRL (312 aa)) is the IF rod domain. A coil 1A region spans residues 112–146 (KEQIKCLNNRFAAFIDKVRFLEQQNKLLETKLQFY). The tract at residues 147–156 (QNRQCCESNL) is linker 1. Residues 157–257 (EPLFEGYIET…YEEEIRVLQA (101 aa)) are coil 1B. Lysine 217 is covalently cross-linked (Glycyl lysine isopeptide (Lys-Gly) (interchain with G-Cter in SUMO1)). The tract at residues 258 to 274 (NISDTSVIVKMDNSRGL) is linker 12. A coil 2 region spans residues 275-418 (NMDNIVAEIK…ATYRRLLEGE (144 aa)). The segment at 419-493 (EQRLCEGVGA…GGGSCSLGRC (75 aa)) is tail.

The protein belongs to the intermediate filament family. As to quaternary structure, heterotetramer of two type I and two type II keratins.

This chain is Keratin, type II cuticular Hb3, found in Bos taurus (Bovine).